A 424-amino-acid polypeptide reads, in one-letter code: Dual-specificity RNA methyltransferase RlmN (424 aa).

Residue Glu132 is the Proton acceptor of the active site. The Radical SAM core domain maps to 138–388 (GPDRGTLCVS…VRTPRGRDIL (251 aa)). Cys145 and Cys391 are joined by a disulfide. Residues Cys152, Cys156, and Cys159 each contribute to the [4Fe-4S] cluster site. Residues 217-218 (GE), Ser249, 271-273 (SLH), and Asn348 contribute to the S-adenosyl-L-methionine site. The S-methylcysteine intermediate role is filled by Cys391.

Belongs to the radical SAM superfamily. RlmN family. [4Fe-4S] cluster serves as cofactor.

It localises to the cytoplasm. The catalysed reaction is adenosine(2503) in 23S rRNA + 2 reduced [2Fe-2S]-[ferredoxin] + 2 S-adenosyl-L-methionine = 2-methyladenosine(2503) in 23S rRNA + 5'-deoxyadenosine + L-methionine + 2 oxidized [2Fe-2S]-[ferredoxin] + S-adenosyl-L-homocysteine. It catalyses the reaction adenosine(37) in tRNA + 2 reduced [2Fe-2S]-[ferredoxin] + 2 S-adenosyl-L-methionine = 2-methyladenosine(37) in tRNA + 5'-deoxyadenosine + L-methionine + 2 oxidized [2Fe-2S]-[ferredoxin] + S-adenosyl-L-homocysteine. Functionally, specifically methylates position 2 of adenine 2503 in 23S rRNA and position 2 of adenine 37 in tRNAs. m2A2503 modification seems to play a crucial role in the proofreading step occurring at the peptidyl transferase center and thus would serve to optimize ribosomal fidelity. The chain is Dual-specificity RNA methyltransferase RlmN from Methylobacterium radiotolerans (strain ATCC 27329 / DSM 1819 / JCM 2831 / NBRC 15690 / NCIMB 10815 / 0-1).